The primary structure comprises 190 residues: 2-phospho-L-lactate guanylyltransferase (190 aa).

Belongs to the CofC family. In terms of assembly, homodimer.

The catalysed reaction is (2S)-2-phospholactate + GTP + H(+) = (2S)-lactyl-2-diphospho-5'-guanosine + diphosphate. It participates in cofactor biosynthesis; coenzyme F420 biosynthesis. Guanylyltransferase that catalyzes the activation of (2S)-2-phospholactate (2-PL) as (2S)-lactyl-2-diphospho-5'-guanosine, via the condensation of 2-PL with GTP. It is involved in the biosynthesis of coenzyme F420, a hydride carrier cofactor. This is 2-phospho-L-lactate guanylyltransferase from Methanopyrus kandleri (strain AV19 / DSM 6324 / JCM 9639 / NBRC 100938).